The following is a 395-amino-acid chain: S-adenosylmethionine synthase (395 aa).

Residue H16 participates in ATP binding. A Mg(2+)-binding site is contributed by D18. E44 lines the K(+) pocket. E57 and Q100 together coordinate L-methionine. Residues 100-110 (QSPDIAGGVNL) are flexible loop. ATP is bound by residues 175 to 177 (DGK), 242 to 243 (RF), D251, 257 to 258 (RK), A274, and K278. Residue D251 coordinates L-methionine. An L-methionine-binding site is contributed by K282.

It belongs to the AdoMet synthase family. As to quaternary structure, homotetramer; dimer of dimers. Mg(2+) is required as a cofactor. Requires K(+) as cofactor.

Its subcellular location is the cytoplasm. The catalysed reaction is L-methionine + ATP + H2O = S-adenosyl-L-methionine + phosphate + diphosphate. It participates in amino-acid biosynthesis; S-adenosyl-L-methionine biosynthesis; S-adenosyl-L-methionine from L-methionine: step 1/1. Functionally, catalyzes the formation of S-adenosylmethionine (AdoMet) from methionine and ATP. The overall synthetic reaction is composed of two sequential steps, AdoMet formation and the subsequent tripolyphosphate hydrolysis which occurs prior to release of AdoMet from the enzyme. This chain is S-adenosylmethionine synthase, found in Thermus thermophilus (strain ATCC BAA-163 / DSM 7039 / HB27).